The chain runs to 939 residues: Vacuolar membrane protease (939 aa).

The Cytoplasmic segment spans residues 1 to 11 (MGFNSIFKFRK). The helical transmembrane segment at 12–32 (TSLSLLLFAVYFIIGILYFID) threads the bilayer. At 33-356 (KTRYKHSLPI…TFVAIPSTKL (324 aa)) the chain is on the vacuolar side. N-linked (GlcNAc...) asparagine glycans are attached at residues asparagine 59, asparagine 88, and asparagine 114. Residues histidine 149 and aspartate 161 each contribute to the Zn(2+) site. The Proton acceptor role is filled by glutamate 193. 3 residues coordinate Zn(2+): glutamate 194, glutamate 219, and histidine 293. Asparagine 326 is a glycosylation site (N-linked (GlcNAc...) asparagine). Residues 357-377 (FWINIALLIIMPIISIFLFSI) traverse the membrane as a helical segment. At 378-388 (VKKYNNEIIDS) the chain is on the cytoplasmic side. A helical transmembrane segment spans residues 389-409 (GNIWWRLPISAMSSGTIIIFT). Topologically, residues 410–424 (TKLIMKWNPYILSRN) are vacuolar. A helical transmembrane segment spans residues 425–445 (FLLPLIGLTFEFIILNSYILT). Residues 446-453 (MFENLSSS) lie on the Cytoplasmic side of the membrane. Residues 454–474 (FDFKTIAINEISFLFWIVLAY) form a helical membrane-spanning segment. The Vacuolar portion of the chain corresponds to 475 to 491 (QTWKLYDNNYQNTGIYP). The helical transmembrane segment at 492 to 512 (FTICYIVMATAGNIGYLFLIF) threads the bilayer. Residues 513 to 588 (KNIEIVEDEE…NQRTILKESK (76 aa)) are Cytoplasmic-facing. A compositionally biased stretch (basic and acidic residues) spans 540–552 (YRDEINGRDDSSR). The segment at 540-561 (YRDEINGRDDSSRDSNSASIPT) is disordered. Residues 589-609 (LVYNYDWIIEFLLVVPFSTFL) traverse the membrane as a helical segment. Residues 610–636 (LYNSLELIMDAVNQTIQETGDLYKVYK) are Vacuolar-facing. N-linked (GlcNAc...) asparagine glycosylation is present at asparagine 622. Residues 637–657 (ILAIGSILISIPTLPFAYKIG) traverse the membrane as a helical segment. Residues 658–663 (CQLGKT) are Cytoplasmic-facing. A helical membrane pass occupies residues 664 to 684 (LTFISIGCLLISMALAPFTEM). Residues 685–939 (NPIKFRFMQV…LVKLTEAMVL (255 aa)) lie on the Vacuolar side of the membrane. Residues asparagine 810 and asparagine 820 are each glycosylated (N-linked (GlcNAc...) asparagine).

It belongs to the peptidase M28 family. Zn(2+) serves as cofactor.

It localises to the vacuole membrane. May be involved in vacuolar sorting and osmoregulation. The protein is Vacuolar membrane protease of Vanderwaltozyma polyspora (strain ATCC 22028 / DSM 70294 / BCRC 21397 / CBS 2163 / NBRC 10782 / NRRL Y-8283 / UCD 57-17) (Kluyveromyces polysporus).